The sequence spans 383 residues: Probable cell wall hydrolase LytN (383 aa).

Residues 1–49 (MFIYYCKECSIMNKQQSKVRYSIRKVSIGILSISIGMFLALGMSNKAYA) form the signal peptide. Positions 175–219 (QIYTVKKGDTLSAIALKYKTTVSNIQNTNNIANPNLIFIGQKLKV) constitute a LysM domain. The Peptidase C51 domain maps to 241–378 (NSSTLNYLKT…NYENDMIFIR (138 aa)).

The protein localises to the secreted. Its function is as follows. Probably involved in peptidoglycan hydrolysis. The protein is Probable cell wall hydrolase LytN (lytN) of Staphylococcus aureus (strain Mu50 / ATCC 700699).